We begin with the raw amino-acid sequence, 73 residues long: Neutrophil elastase 2B (73 aa).

Positions 1-73 (IVGGRPARPH…SGGPLVCNGL (73 aa)) constitute a Peptidase S1 domain. The active-site Charge relay system is S64.

Belongs to the peptidase S1 family. Elastase subfamily.

In terms of biological role, may be involved in the degradation of connective tissue in chronic lung disease. The chain is Neutrophil elastase 2B from Equus caballus (Horse).